Reading from the N-terminus, the 476-residue chain is Zinc finger CCCH domain-containing protein 6 (476 aa).

Over residues 1–10 (MEQPHAAAAA) the composition is skewed to low complexity. Residues 1-57 (MEQPHAAAAAAGGGEGEGGASPDTGLEGPMWRMGLGGGGGGGGGGGGGDGDAAGRLP) are disordered. Residues 34–51 (GLGGGGGGGGGGGGGDGD) are compositionally biased toward gly residues. 3 consecutive C3H1-type zinc fingers follow at residues 59-87 (RPGE…HPRD), 108-136 (RAGQ…HPKQ), and 153-181 (RLGE…HPEF). Residues 290–301 (SSTGQSSNNQQE) show a composition bias toward polar residues. Positions 290–309 (SSTGQSSNNQQEHGFPERPG) are disordered. 2 C3H1-type zinc fingers span residues 307 to 335 (RPGQ…HPRE) and 353 to 381 (RPGA…HPMG). A disordered region spans residues 456–476 (TMMRAQTNTTSGGSSSPGGGR).

The protein localises to the nucleus. The protein is Zinc finger CCCH domain-containing protein 6 of Oryza sativa subsp. japonica (Rice).